Here is a 181-residue protein sequence, read N- to C-terminus: Ras-like protein 1 (181 aa).

A GTP-binding site is contributed by 10-17; the sequence is GAGGVGKS. The Effector region motif lies at 32–40; sequence YDPTIEDSY. GTP is bound by residues 57-61 and 116-119; these read DTAGQ and NKCD. Cys178 carries the cysteine methyl ester modification. Cys178 carries S-geranylgeranyl cysteine lipidation. The propeptide at 179-181 is removed in mature form; that stretch reads KML.

This sequence belongs to the small GTPase superfamily. Ras family.

It localises to the cell membrane. The catalysed reaction is GTP + H2O = GDP + phosphate + H(+). Alternates between an inactive form bound to GDP and an active form bound to GTP. Activated by a guanine nucleotide-exchange factor (GEF) and inactivated by a GTPase-activating protein (GAP). Functionally, ras proteins bind GDP/GTP and possess intrinsic GTPase activity. Plays a role in eye development by regulating cell growth, survival of postmitotic ommatidial cells and differentiation of photoreceptor cells. During larval development, mediates Ptth/tor signaling leading to the production of ecdysone, a hormone required for the initiation of metamorphosis. The sequence is that of Ras-like protein 1 from Drosophila mojavensis (Fruit fly).